Consider the following 130-residue polypeptide: Small ribosomal subunit protein uS8 (130 aa).

This sequence belongs to the universal ribosomal protein uS8 family. Part of the 30S ribosomal subunit. Contacts proteins S5 and S12.

Its function is as follows. One of the primary rRNA binding proteins, it binds directly to 16S rRNA central domain where it helps coordinate assembly of the platform of the 30S subunit. This Marinomonas sp. (strain MWYL1) protein is Small ribosomal subunit protein uS8.